The sequence spans 392 residues: MTTRHTQTRDGRIAIRRDGARLAHARARARFEWLLLARGRPSKLYGYTSRHRGERIHLPWPRYWCLELHPDPYRDARSATVWGHRWGWPPTHVRPRSVQDCALDSSLYVCCGYGEKLQPVGFVSSYLTHSPLDTLRVLLVGRDGAVYVHHMRAARLCRLASNVTEFARRGLQRDPVAYEEDLELPDRRMCGTNVRHLFDVIAAAADEHDLLTVGGLCQTHAGVSCELLETVRDPWTAVPGVRMTLTVARAQYRLWPDARRQLRLHLYAGHPLGPWIVCAVLSRERETQTPSPPIGSGGVILGNVPTPGPREVETAWVIVTVAGPLLSFWPDNGKICRLANSFAALWRMGPRAMRGHWTYSAPGRHLPGDAWPLCEHVRPPVGKLPRQRAYLD.

Belongs to the Roseolovirus DR6 family.

The protein localises to the host nucleus. In terms of biological role, inhibits the host G2/M cell-cycle progression in a p53-independent manner. This Human herpesvirus 6B (strain Z29) (HHV-6 variant B) protein is G2/M cell-cycle inhibitor DR6 (DR6).